Here is a 166-residue protein sequence, read N- to C-terminus: Photosystem I assembly protein Ycf3 (166 aa).

TPR repeat units follow at residues 35-68, 72-105, and 120-153; these read AFVY…EVDP, SFIF…NPSL, and GEQA…APLN.

This sequence belongs to the Ycf3 family.

The protein localises to the plastid. It localises to the chloroplast thylakoid membrane. Its function is as follows. Essential for the assembly of the photosystem I (PSI) complex. May act as a chaperone-like factor to guide the assembly of the PSI subunits. This Ostreococcus tauri protein is Photosystem I assembly protein Ycf3.